Here is a 255-residue protein sequence, read N- to C-terminus: Taurine import ATP-binding protein TauB (255 aa).

In terms of domain architecture, ABC transporter spans 2-229 (LQISHLYADY…RFVAGESSRS (228 aa)). 34–41 (GPSGCGKT) serves as a coordination point for ATP.

The protein belongs to the ABC transporter superfamily. Taurine importer (TC 3.A.1.17.1) family. In terms of assembly, the complex is composed of two ATP-binding proteins (TauB), two transmembrane proteins (TauC) and a solute-binding protein (TauA).

Its subcellular location is the cell inner membrane. It catalyses the reaction taurine(out) + ATP + H2O = taurine(in) + ADP + phosphate + H(+). Its function is as follows. Part of the ABC transporter complex TauABC involved in taurine import. Responsible for energy coupling to the transport system. This is Taurine import ATP-binding protein TauB from Escherichia coli O157:H7.